The sequence spans 555 residues: Glucose-6-phosphate isomerase (555 aa).

D-glucose 6-phosphate is bound by residues 169–170 (GS), 219–224 (SKTFTT), glutamine 364, glutamate 368, histidine 399, and lysine 521. Glutamate 368 serves as the catalytic Proton donor. Active-site residues include histidine 399 and lysine 521.

This sequence belongs to the GPI family. Homodimer.

Its subcellular location is the cytoplasm. The protein localises to the cytosol. The catalysed reaction is alpha-D-glucose 6-phosphate = beta-D-fructose 6-phosphate. It participates in carbohydrate degradation; glycolysis; D-glyceraldehyde 3-phosphate and glycerone phosphate from D-glucose: step 2/4. In the cytoplasm, catalyzes the conversion of glucose-6-phosphate to fructose-6-phosphate, the second step in glycolysis, and the reverse reaction during gluconeogenesis. The protein is Glucose-6-phosphate isomerase (PGI1) of Eremothecium gossypii (strain ATCC 10895 / CBS 109.51 / FGSC 9923 / NRRL Y-1056) (Yeast).